A 129-amino-acid chain; its full sequence is N16.5 matrix protein (129 aa).

Positions 1–23 (MTCTLRWTITALVLLGICHLARP) are cleaved as a signal peptide. 5 consecutive repeat copies span residues 91-92 (NG), 93-94 (NG), 95-96 (NG), 97-98 (NG), and 99-100 (NG). The tract at residues 91-100 (NGNGNGNGNG) is 5 X 2 AA tandem repeats of N-G.

Belongs to the N16 matrix protein family. As to quaternary structure, heterooligomer; disulfide-linked. Pif97, Pif80, N16 and other proteins form a complex. Component of conchiolin, the organic matrix of nacre. Specifically expressed in mantle epithelium.

It is found in the secreted. Its subcellular location is the extracellular space. The protein localises to the extracellular matrix. In terms of biological role, may be specifically involved in the formation of the nacreous layer. This Pinctada fucata (Akoya pearl oyster) protein is N16.5 matrix protein.